A 431-amino-acid polypeptide reads, in one-letter code: 3-phosphoshikimate 1-carboxyvinyltransferase (431 aa).

K21, S22, and R26 together coordinate 3-phosphoshikimate. K21 is a binding site for phosphoenolpyruvate. Phosphoenolpyruvate contacts are provided by G93 and R121. 3-phosphoshikimate is bound by residues S166, Q168, D318, and K345. Q168 is a phosphoenolpyruvate binding site. Catalysis depends on D318, which acts as the Proton acceptor. Phosphoenolpyruvate-binding residues include R349 and R391.

This sequence belongs to the EPSP synthase family. In terms of assembly, monomer.

It localises to the cytoplasm. It catalyses the reaction 3-phosphoshikimate + phosphoenolpyruvate = 5-O-(1-carboxyvinyl)-3-phosphoshikimate + phosphate. It participates in metabolic intermediate biosynthesis; chorismate biosynthesis; chorismate from D-erythrose 4-phosphate and phosphoenolpyruvate: step 6/7. Its function is as follows. Catalyzes the transfer of the enolpyruvyl moiety of phosphoenolpyruvate (PEP) to the 5-hydroxyl of shikimate-3-phosphate (S3P) to produce enolpyruvyl shikimate-3-phosphate and inorganic phosphate. This Sulfurihydrogenibium sp. (strain YO3AOP1) protein is 3-phosphoshikimate 1-carboxyvinyltransferase.